The primary structure comprises 151 residues: MKVILRKDVAALGDAGEVVAVKNGYANNYLIPQGMATRATEGTLKALETEKKQQARKVELQRTSARELAQKIEQMVLKVQAKAGESGKLFGTVTAGDIADALKAVGVEIDRRKITLEAPVKLLGKYEAEAKLFSDVTVKVTFEVEAEGTEA.

It belongs to the bacterial ribosomal protein bL9 family.

Functionally, binds to the 23S rRNA. This chain is Large ribosomal subunit protein bL9, found in Chlorobium luteolum (strain DSM 273 / BCRC 81028 / 2530) (Pelodictyon luteolum).